An 818-amino-acid chain; its full sequence is Catenin beta (818 aa).

Composition is skewed to polar residues over residues 1-21 (METYQQMNSGSGPRSVGTPQG) and 48-66 (GDSGIQSGATTQAPPSVSS). Disordered regions lie at residues 1 to 24 (METYQQMNSGSGPRSVGTPQGQYM) and 48 to 71 (GDSGIQSGATTQAPPSVSSKHGLD). 7 ARM repeats span residues 164–203 (NYQDDADLATRAIPELTKLLNDEDQVVVSQAAMMVHQLSK), 248–287 (RQGLLTIFKSGGIPALVKLLSSPVESVLFYAITTLHNLLL), 412–451 (DAATKSSDIEGLLQMLVQLLASNDINIVTCAAGILSNLTC), 454–495 (QRNK…HLTS), 501–541 (EMAQ…NLAL), 543–582 (PANHAPLREHGAIPRIVQLLIRAHQDTQRRATAGSGNTSA), and 648–687 (KEGAEMIEQEGTTAPLTELLHSRNEGVATYAAAVLFRMSE). The segment at 732-818 (QGFRGYQGSG…QMAAWFDTDL (87 aa)) is disordered.

Belongs to the beta-catenin family.

Its subcellular location is the cytoplasm. The protein localises to the cytoskeleton. In terms of biological role, binds to the cytoplasmic domain of the cell-cell adhesion molecule E-cadherin, and perhaps to other (membrane) proteins. The association of catenins to cadherins produces a complex which is linked to the actin filament network, and which seems to be of primary importance for cadherins cell-adhesion properties. The protein is Catenin beta of Urechis caupo (Innkeeper worm).